Here is a 66-residue protein sequence, read N- to C-terminus: Large ribosomal subunit protein uL29 (66 aa).

It belongs to the universal ribosomal protein uL29 family.

In Caldanaerobacter subterraneus subsp. tengcongensis (strain DSM 15242 / JCM 11007 / NBRC 100824 / MB4) (Thermoanaerobacter tengcongensis), this protein is Large ribosomal subunit protein uL29.